The sequence spans 275 residues: Ribosomal RNA small subunit methyltransferase A (275 aa).

Residues asparagine 19, leucine 21, glycine 46, glutamate 71, aspartate 94, and asparagine 117 each coordinate S-adenosyl-L-methionine.

It belongs to the class I-like SAM-binding methyltransferase superfamily. rRNA adenine N(6)-methyltransferase family. RsmA subfamily.

Its subcellular location is the cytoplasm. It catalyses the reaction adenosine(1518)/adenosine(1519) in 16S rRNA + 4 S-adenosyl-L-methionine = N(6)-dimethyladenosine(1518)/N(6)-dimethyladenosine(1519) in 16S rRNA + 4 S-adenosyl-L-homocysteine + 4 H(+). Functionally, specifically dimethylates two adjacent adenosines (A1518 and A1519) in the loop of a conserved hairpin near the 3'-end of 16S rRNA in the 30S particle. May play a critical role in biogenesis of 30S subunits. The polypeptide is Ribosomal RNA small subunit methyltransferase A (Burkholderia pseudomallei (strain 668)).